The sequence spans 932 residues: Receptor-like protein 9a (932 aa).

The first 28 residues, 1–28 (MLIFTIPQFFFAAWVMVVSLQMQGYISC), serve as a signal peptide directing secretion. Over 29–888 (IEKERKGLLE…DDETAIDMET (860 aa)) the chain is Extracellular. Asn53, Asn80, and Asn90 each carry an N-linked (GlcNAc...) asparagine glycan. 28 LRR repeats span residues 97–122 (FEELRTLNLYDFGCTGWFDDIHGYKS), 126–152 (LKKLEILDMGNNEVNNSVLPFLNAASS), 154–174 (RTLILHGNNMEGTFPMKELKD), 175–200 (LSNLELLDLSGNLLNGPVPGLAVLHK), 202–222 (HALDLSDNTFSGSLGREGLCQ), 223–246 (LKNLQELDLSQNEFTGPFPQCFSS), 247–273 (LTQLQVLDMSSNQFNGTLPSVISNLDS), 275–295 (EYLSLSDNKFEGFFSFDLIAN), 296–320 (LSKLKVFKLSSKSSLLHIESEISLQ), 322–345 (KFRLSVIDLKYCNLEAVPSFLQQQ), 346–368 (KDLRLINLSNNKLTGISPSWFLE), 370–393 (YPKLRVLLLWNNSFTIFHLPRLLV), 394–417 (HSLHVLDLSVNKFDEWLPNNIGHV), 418–441 (LPNISHLNLSNNGFQGNLPSSFSE), 443–466 (KKIFFLDLSHNNLSGSLPKKFCIG), 468–491 (SSLSILKLSYNRFSGKIFPQPMKL), 492–514 (ESLRVLIADNNQFTEITDVLIHS), 516–535 (GLVFLELSNNSLQGVIPSWF), 536–560 (GGFYFLYLSVSDNLLNGTIPSTLFN), 561–583 (VSFQLLDLSRNKFSGNLPSHFSF), 585–605 (HMGLLYLHDNEFSGPVPSTLL), 606–629 (ENVMLLDLRNNKLSGTIPRFVSNR), 631–652 (FLYLLLRGNALTGHIPTSLCEL), 653–676 (KSIRVLDLANNRLNGSIPPCLNNV), 745–769 (FKFMFGLDFSSNELIGEIPRELGDF), 770–792 (QRIRALNLSHNSLSGLVPESFSN), 794–817 (TDIESIDLSFNVLHGPIPHDLTKL), and 819–842 (YIVVFNVSYNNLSGLIPSQGKFLS). N-linked (GlcNAc...) asparagine glycosylation occurs at Asn140. N-linked (GlcNAc...) asparagine glycosylation is found at Asn261 and Asn295. N-linked (GlcNAc...) asparagine glycans are attached at residues Asn352 and Asn380. 3 N-linked (GlcNAc...) asparagine glycosylation sites follow: Asn420, Asn425, and Asn454. Asn524, Asn551, and Asn560 each carry an N-linked (GlcNAc...) asparagine glycan. N-linked (GlcNAc...) asparagine glycans are attached at residues Asn666 and Asn675. Asn776 and Asn792 each carry an N-linked (GlcNAc...) asparagine glycan. 4 N-linked (GlcNAc...) asparagine glycosylation sites follow: Asn824, Asn829, Asn860, and Asn866. A helical membrane pass occupies residues 889-909 (FYWSLFATYGITWMAFIVFLC). The Cytoplasmic portion of the chain corresponds to 910–932 (FDSPWRQAWFRLVNVFVSFLKCV).

Belongs to the RLP family.

Its subcellular location is the cell membrane. The polypeptide is Receptor-like protein 9a (Arabidopsis thaliana (Mouse-ear cress)).